The chain runs to 367 residues: Eukaryotic translation initiation factor 3 subunit H (367 aa).

The MPN domain maps to 14-166; the sequence is VQVEALVVMK…LRAFRLSPNF (153 aa).

Belongs to the eIF-3 subunit H family. In terms of assembly, component of the eukaryotic translation initiation factor 3 (eIF-3) complex.

It is found in the cytoplasm. Its function is as follows. Component of the eukaryotic translation initiation factor 3 (eIF-3) complex, which is involved in protein synthesis of a specialized repertoire of mRNAs and, together with other initiation factors, stimulates binding of mRNA and methionyl-tRNAi to the 40S ribosome. The eIF-3 complex specifically targets and initiates translation of a subset of mRNAs involved in cell proliferation. The polypeptide is Eukaryotic translation initiation factor 3 subunit H (Sclerotinia sclerotiorum (strain ATCC 18683 / 1980 / Ss-1) (White mold)).